The sequence spans 574 residues: Probable glucomannan 4-beta-mannosyltransferase 6 (574 aa).

Residues 87 to 107 (VVACMVMSVIVLAEKVFLGVV) traverse the membrane as a helical segment. Residue Asp-180 is part of the active site. The substrate site is built by Asp-239 and Asp-241. Asp-333 is an active-site residue. Transmembrane regions (helical) follow at residues 412–432 (IIST…KVFF), 437–457 (IPLW…SVGT), 523–543 (FHCL…YDYL), and 548–568 (IFYI…FEFM).

This sequence belongs to the glycosyltransferase 2 family. Plant cellulose synthase-like A subfamily.

The protein resides in the golgi apparatus membrane. It catalyses the reaction GDP-mannose + (glucomannan)n = GDP + (glucomannan)n+1.. Its function is as follows. Probable mannan synthase which consists of a 4-beta-mannosyltransferase activity on mannan using GDP-mannose. The beta-1,4-mannan product is the backbone for galactomannan synthesis by galactomannan galactosyltransferase. Galactomannan is a noncellulosic polysaccharides of plant cell wall. This is Probable glucomannan 4-beta-mannosyltransferase 6 from Oryza sativa subsp. japonica (Rice).